The primary structure comprises 198 residues: Imidazoleglycerol-phosphate dehydratase (198 aa).

It belongs to the imidazoleglycerol-phosphate dehydratase family.

It localises to the cytoplasm. It carries out the reaction D-erythro-1-(imidazol-4-yl)glycerol 3-phosphate = 3-(imidazol-4-yl)-2-oxopropyl phosphate + H2O. It participates in amino-acid biosynthesis; L-histidine biosynthesis; L-histidine from 5-phospho-alpha-D-ribose 1-diphosphate: step 6/9. The protein is Imidazoleglycerol-phosphate dehydratase of Magnetococcus marinus (strain ATCC BAA-1437 / JCM 17883 / MC-1).